The primary structure comprises 273 residues: SKA complex subunit 1 homolog (273 aa).

Positions 77-97 (KKLVQRSLKEEEKLQHMLANL) form a coiled coil.

This sequence belongs to the SKA1 family.

This Zea mays (Maize) protein is SKA complex subunit 1 homolog.